The primary structure comprises 681 residues: Secretion system apparatus protein SsaV (681 aa).

7 helical membrane passes run 24–44, 48–68, 73–93, 118–138, 206–226, 244–264, and 295–315; these read MVLA…LPTW, ILIT…IYLS, LSVF…LTIS, GNLT…FIVI, TIAG…IAIV, IGDG…AGII, and AVVL…LAFF.

The protein belongs to the FHIPEP (flagella/HR/invasion proteins export pore) family.

Its subcellular location is the cell inner membrane. In terms of biological role, component of Salmonella pathogenicity island 2 (SPI-2) type III secretion system, required for secretion of some type III-secreted effectors including the SpvB exotoxin. This is Secretion system apparatus protein SsaV (ssaV) from Salmonella typhimurium (strain 14028s / SGSC 2262).